We begin with the raw amino-acid sequence, 67 residues long: ARDGYISQPENCVYHCFPGSSGCDTLCKEKGGTGGHCGYKEGRGLACWCLELPDNVGIIVDGIKCHT.

The LCN-type CS-alpha/beta domain occupies 2–66 (RDGYISQPEN…GIIVDGIKCH (65 aa)). 4 disulfide bridges follow: Cys-12–Cys-65, Cys-16–Cys-37, Cys-23–Cys-47, and Cys-27–Cys-49. Threonine amide is present on Thr-67.

Belongs to the long (4 C-C) scorpion toxin superfamily. Sodium channel inhibitor family. Alpha subfamily. As to expression, expressed by the venom gland.

It is found in the secreted. Alpha toxins bind voltage-independently at site-3 of sodium channels (Nav) and inhibit the inactivation of the activated channels, thereby blocking neuronal transmission. Is highly toxic to insects (tested on the crickets A.domesticus). This peptide may also be toxic to mammals, since it is similar to alpha-like toxins that are active on both insect and mammalian sodium channels. This Buthacus leptochelys (Egyptian fat-tailed scorpion) protein is Toxin Bl-1.